The primary structure comprises 165 residues: RxLR effector protein CRE12 (165 aa).

The first 23 residues, 1–23 (MRLAAFVLVAVAFAIIPDGRVSA), serve as a signal peptide directing secretion. The short motif at 40 to 59 (RLLRLNAVPQPVETGNQEER) is the RxLR-dEER element.

The protein belongs to the RxLR effector family.

The protein localises to the secreted. Its subcellular location is the host cell. Effector that is involved in host plant infection. Contributes to virulence during the early infection stage, by inhibiting plant defense responses induced by both PAMP-triggered immunity (PTI) and effector-triggered immunity (ETI). The sequence is that of RxLR effector protein CRE12 from Phytophthora infestans (strain T30-4) (Potato late blight agent).